A 478-amino-acid polypeptide reads, in one-letter code: Violaxanthin de-epoxidase, chloroplastic (478 aa).

Residues 388-453 (LVERLEKKVE…RELSKEEMDV (66 aa)) are a coiled coil.

This sequence belongs to the calycin superfamily. Lipocalin family.

It is found in the plastid. The protein resides in the chloroplast thylakoid membrane. The catalysed reaction is all-trans-violaxanthin + 2 L-ascorbate = all-trans-zeaxanthin + 2 L-dehydroascorbate + 2 H2O. In terms of biological role, part of the xanthophyll (or violaxanthin) cycle for controlling the concentration of zeaxanthin in chloroplasts. Catalyzes the two-step mono de-epoxidation reaction. Stereospecific for all-trans xanthophylls. Zeaxanthin induces the dissipation of excitation energy in the chlorophyll of the light-harvesting protein complex of photosystem II. This is Violaxanthin de-epoxidase, chloroplastic (VDE1) from Nicotiana tabacum (Common tobacco).